A 273-amino-acid polypeptide reads, in one-letter code: MTAPTIQPGELGIEVVADSAGRTRTASLRQRYPQRVTMPLHCDPDRPGAVTLCVQSPSGGTFSDDELRTTVACRAGSHLHLTTQSATQVFAGDGAGARHHLDFTVDRGAALEYYPGTVIPHTDSTFTQTIEVNVETGGLYLGWEAVAAGRLAHGERYGYHTYDSAILARVDGRAVARDRQVIRPGTDAMSLLEGDYLATLLVVAPGADIEALLRRLRATLDDGSGVSGGAGRLPAHAGVFLRLIAQRAPDLHRARTDLFAAARRELLPGKDES.

This sequence belongs to the UreD family. In terms of assembly, ureD, UreF and UreG form a complex that acts as a GTP-hydrolysis-dependent molecular chaperone, activating the urease apoprotein by helping to assemble the nickel containing metallocenter of UreC. The UreE protein probably delivers the nickel.

It localises to the cytoplasm. Required for maturation of urease via the functional incorporation of the urease nickel metallocenter. This Mycolicibacterium gilvum (strain PYR-GCK) (Mycobacterium gilvum (strain PYR-GCK)) protein is Urease accessory protein UreD.